A 241-amino-acid chain; its full sequence is Carboxy-S-adenosyl-L-methionine synthase (241 aa).

S-adenosyl-L-methionine-binding positions include Tyr-38, Gly-63 to Ser-65, Asp-88 to Asn-89, Asp-116 to Ile-117, Asn-131, and Arg-198.

Belongs to the class I-like SAM-binding methyltransferase superfamily. Cx-SAM synthase family. Homodimer.

The catalysed reaction is prephenate + S-adenosyl-L-methionine = carboxy-S-adenosyl-L-methionine + 3-phenylpyruvate + H2O. Its function is as follows. Catalyzes the conversion of S-adenosyl-L-methionine (SAM) to carboxy-S-adenosyl-L-methionine (Cx-SAM). This Haemophilus influenzae (strain PittGG) protein is Carboxy-S-adenosyl-L-methionine synthase.